The following is a 757-amino-acid chain: Endonuclease MutS2 (757 aa).

321 to 328 (GPNMGGKT) contributes to the ATP binding site. One can recognise a Smr domain in the interval 681 to 756 (IDIRGMTVEE…GTGVTVVEVK (76 aa)).

This sequence belongs to the DNA mismatch repair MutS family. MutS2 subfamily. In terms of assembly, homodimer. Binds to stalled ribosomes, contacting rRNA.

In terms of biological role, endonuclease that is involved in the suppression of homologous recombination and thus may have a key role in the control of bacterial genetic diversity. Functionally, acts as a ribosome collision sensor, splitting the ribosome into its 2 subunits. Detects stalled/collided 70S ribosomes which it binds and splits by an ATP-hydrolysis driven conformational change. Acts upstream of the ribosome quality control system (RQC), a ribosome-associated complex that mediates the extraction of incompletely synthesized nascent chains from stalled ribosomes and their subsequent degradation. Probably generates substrates for RQC. This chain is Endonuclease MutS2, found in Thermotoga petrophila (strain ATCC BAA-488 / DSM 13995 / JCM 10881 / RKU-1).